The sequence spans 132 residues: Intraflagellar transport protein 20 homolog (132 aa).

The segment at 70–132 (MKAIGARNLL…EFIDQFIFQK (63 aa)) is IFT57-binding. A coiled-coil region spans residues 74–116 (GARNLLKSIAKQREAQQQQLQALIAEKKTQLERYRVEYEALCK).

In terms of assembly, component of the IFT complex B, at least composed of IFT20, IFT22, IFT25, IFT27, IFT46, IFT52, TRAF3IP1/IFT54, IFT57, IFT74, IFT80, IFT81, and IFT88. Interacts directly with IFT57 and KIF3B/Kinesin II subunit. Interacts with IFT88. Interacts with CEP83. Interacts with SPEF2 (via C-terminus). Interacts with CBL and CBLB. Interacts with TRIP11. Interacts with TTC21A. Interacts with SPATA1. Interacts with USH1G. Interacts with CCDC146. Interacts with CEP78; regulating IFT20 stability and localization. Expressed predominantly in the testis (at protein level). Expressed in kidney and retina. Expression is up-regulated during spermiogenesis.

It is found in the golgi apparatus. The protein resides in the cis-Golgi network. Its subcellular location is the cytoplasm. It localises to the cytoskeleton. The protein localises to the microtubule organizing center. It is found in the centrosome. The protein resides in the centriole. Its subcellular location is the cilium basal body. It localises to the cell projection. The protein localises to the cilium. It is found in the cytoplasmic vesicle. The protein resides in the secretory vesicle. Its subcellular location is the acrosome. Part of intraflagellar transport (IFT) particles involved in ciliary process assembly. May play a role in the trafficking of ciliary membrane proteins from the Golgi complex to the cilium. Regulates the ciliary platelet-derived growth factor receptor-alpha (PDGFRA) signaling pathway. Required for protein stability of E3 ubiquitin ligases CBL and CBLB that mediate ubiquitination and internalization of PDGFRA for proper feedback inhibition of PDGFRA signaling. Essential for male fertility. Plays an important role in spermatogenesis, particularly spermiogenesis, when germ cells form flagella. May play a role in the transport of flagellar proteins ODF2 and SPAG16 to build sperm flagella and in the removal of redundant sperm cytoplasm. Also involved in autophagy since it is required for trafficking of ATG16L and the expansion of the autophagic compartment. The polypeptide is Intraflagellar transport protein 20 homolog (Ift20) (Mus musculus (Mouse)).